The sequence spans 476 residues: Xylan O-acetyltransferase 4 (476 aa).

The disordered stretch occupies residues 1 to 37 (MTKPQQQSPPSTTATTTTSPPPPPPSTPPPASSSSSS). Topologically, residues 1-63 (MTKPQQQSPP…SLLSALRRSP (63 aa)) are cytoplasmic. Positions 8 to 18 (SPPSTTATTTT) are enriched in low complexity. Residues 19–31 (SPPPPPPSTPPPA) show a composition bias toward pro residues. A helical; Signal-anchor for type II membrane protein membrane pass occupies residues 64–80 (VTTLVAAFFLLALFMYG). Topologically, residues 81–476 (EDVRTLAELS…PSPHPPLPPQ (396 aa)) are lumenal. N-linked (GlcNAc...) asparagine glycans are attached at residues Asn103, Asn128, and Asn167. 4 disulfide bridges follow: Cys117–Cys168, Cys139–Cys204, Cys148–Cys444, and Cys360–Cys440. Positions 191–193 (GDS) match the GDS motif motif. The active-site Nucleophile is the Ser193. 2 N-linked (GlcNAc...) asparagine glycosylation sites follow: Asn299 and Asn369. Asp439 acts as the Proton donor in catalysis. Residues 439–442 (DCIH) carry the DXXH motif motif. His442 functions as the Proton acceptor in the catalytic mechanism.

This sequence belongs to the PC-esterase family. TBL subfamily. As to expression, highly expressed in leaves. Expressed in roots, stems and inflorescences.

Its subcellular location is the golgi apparatus membrane. Xylan acetyltransferase required for 2-O- and 3-O-monoacetylation of xylosyl residues in xylan. Catalyzes the 2-O-acetylation of xylan, followed by nonenzymatic acetyl migration to the O-3 position, resulting in products that are monoacetylated at both O-2 and O-3 positions. This chain is Xylan O-acetyltransferase 4, found in Oryza sativa subsp. japonica (Rice).